Here is a 198-residue protein sequence, read N- to C-terminus: ATP-dependent Clp protease proteolytic subunit 2 (198 aa).

S101 functions as the Nucleophile in the catalytic mechanism. The active site involves H126.

This sequence belongs to the peptidase S14 family. As to quaternary structure, fourteen ClpP subunits assemble into 2 heptameric rings which stack back to back to give a disk-like structure with a central cavity, resembling the structure of eukaryotic proteasomes.

It localises to the cytoplasm. It catalyses the reaction Hydrolysis of proteins to small peptides in the presence of ATP and magnesium. alpha-casein is the usual test substrate. In the absence of ATP, only oligopeptides shorter than five residues are hydrolyzed (such as succinyl-Leu-Tyr-|-NHMec, and Leu-Tyr-Leu-|-Tyr-Trp, in which cleavage of the -Tyr-|-Leu- and -Tyr-|-Trp bonds also occurs).. In terms of biological role, cleaves peptides in various proteins in a process that requires ATP hydrolysis. Has a chymotrypsin-like activity. Plays a major role in the degradation of misfolded proteins. The sequence is that of ATP-dependent Clp protease proteolytic subunit 2 from Thermosynechococcus vestitus (strain NIES-2133 / IAM M-273 / BP-1).